Consider the following 339-residue polypeptide: Pyrimidine monooxygenase RutA (339 aa).

FMN contacts are provided by residues 26–27 (IK), asparagine 92, glutamate 101, 117–118 (RY), and serine 167.

Belongs to the NtaA/SnaA/DszA monooxygenase family. RutA subfamily.

It catalyses the reaction uracil + FMNH2 + NADH + O2 = (Z)-3-ureidoacrylate + FMN + NAD(+) + H2O + H(+). It carries out the reaction thymine + FMNH2 + NADH + O2 = (Z)-2-methylureidoacrylate + FMN + NAD(+) + H2O + H(+). In terms of biological role, catalyzes the pyrimidine ring opening between N-3 and C-4 by an unusual flavin hydroperoxide-catalyzed mechanism, adding oxygen atoms in the process to yield ureidoacrylate peracid, that immediately reacts with FMN forming ureidoacrylate and FMN-N(5)-oxide. The FMN-N(5)-oxide reacts spontaneously with NADH to produce FMN. Requires the flavin reductase RutF to regenerate FMN in vivo. This chain is Pyrimidine monooxygenase RutA, found in Cronobacter sakazakii (strain ATCC BAA-894) (Enterobacter sakazakii).